Reading from the N-terminus, the 240-residue chain is Homeobox protein DLX-4 (240 aa).

A disordered region spans residues 80-120 (QPLCGPAEHPQELEADSEKPRLSPEPSERRPQAPAKKLRKP). Residues 88–110 (HPQELEADSEKPRLSPEPSERRP) show a composition bias toward basic and acidic residues. A DNA-binding region (homeobox) is located at residues 117-176 (LRKPRTIYSSLQLQHLNQRFQHTQYLALPERAQLAAQLGLTQTQVKIWFQNKRSKYKKLL).

It belongs to the distal-less homeobox family. In terms of tissue distribution, expressed in leukemia cells and placenta. Also expressed in kidney and fetal liver.

It is found in the nucleus. May play a role in determining the production of hemoglobin S. May act as a repressor. During embryonic development, plays a role in palatogenesis. In Homo sapiens (Human), this protein is Homeobox protein DLX-4 (DLX4).